The sequence spans 122 residues: Large ribosomal subunit protein bL12 (122 aa).

It belongs to the bacterial ribosomal protein bL12 family. In terms of assembly, homodimer. Part of the ribosomal stalk of the 50S ribosomal subunit. Forms a multimeric L10(L12)X complex, where L10 forms an elongated spine to which 2 to 4 L12 dimers bind in a sequential fashion. Binds GTP-bound translation factors.

Its function is as follows. Forms part of the ribosomal stalk which helps the ribosome interact with GTP-bound translation factors. Is thus essential for accurate translation. This chain is Large ribosomal subunit protein bL12, found in Yersinia enterocolitica serotype O:8 / biotype 1B (strain NCTC 13174 / 8081).